The sequence spans 202 residues: Glycerol-3-phosphate acyltransferase (202 aa).

A run of 6 helical transmembrane segments spans residues M2–I22, F54–F74, F85–F105, A118–L138, L140–G160, and L162–F182.

Belongs to the PlsY family. Probably interacts with PlsX.

It localises to the cell membrane. It catalyses the reaction an acyl phosphate + sn-glycerol 3-phosphate = a 1-acyl-sn-glycero-3-phosphate + phosphate. It functions in the pathway lipid metabolism; phospholipid metabolism. Its function is as follows. Catalyzes the transfer of an acyl group from acyl-phosphate (acyl-PO(4)) to glycerol-3-phosphate (G3P) to form lysophosphatidic acid (LPA). This enzyme utilizes acyl-phosphate as fatty acyl donor, but not acyl-CoA or acyl-ACP. The sequence is that of Glycerol-3-phosphate acyltransferase from Staphylococcus carnosus (strain TM300).